The following is a 681-amino-acid chain: T-box-containing protein 2 (681 aa).

A DNA-binding region (T-box) is located at residues 149–323; sequence LWDQFSRAGT…NNPFAKGFRE (175 aa). Disordered regions lie at residues 316-351, 456-489, 521-558, and 589-611; these read PFAKGFREDGARAKKPRNQHNHFSDNDTSPYSEQRR, GITSHSPVQPVPHDNSFTYYNSSSPSSSDSNQSN, PNINIPNTVETNVHSSDSGIGSSPPTPSDDDASNLIPG, and ESGEANANSHTEDFSRNPACQSG. Low complexity predominate over residues 470-489; the sequence is NSFTYYNSSSPSSSDSNQSN. A compositionally biased stretch (polar residues) spans 521–534; that stretch reads PNINIPNTVETNVH.

As to quaternary structure, monomer. In terms of tissue distribution, differentiating muscle and tailbud tip.

The protein localises to the nucleus. In terms of biological role, involved in the transcriptional regulation of genes required for muscle differentiation. Binds to a palindromic site (called T site) and activates gene transcription when bound to such a site. The sequence is that of T-box-containing protein 2 (T2) from Halocynthia roretzi (Sea squirt).